The sequence spans 612 residues: Glutamine--fructose-6-phosphate aminotransferase [isomerizing] (612 aa).

Cysteine 2 acts as the Nucleophile; for GATase activity in catalysis. The Glutamine amidotransferase type-2 domain occupies 2–220; the sequence is CGIVGAIRAH…DGDIALLASD (219 aa). SIS domains are found at residues 288-428 and 461-602; these read AKSV…VRGL and WAQQ…VDKP. The active-site For Fru-6P isomerization activity is lysine 607.

As to quaternary structure, homodimer.

Its subcellular location is the cytoplasm. It carries out the reaction D-fructose 6-phosphate + L-glutamine = D-glucosamine 6-phosphate + L-glutamate. In terms of biological role, catalyzes the first step in hexosamine metabolism, converting fructose-6P into glucosamine-6P using glutamine as a nitrogen source. The polypeptide is Glutamine--fructose-6-phosphate aminotransferase [isomerizing] (Neisseria meningitidis serogroup A / serotype 4A (strain DSM 15465 / Z2491)).